We begin with the raw amino-acid sequence, 422 residues long: Keratin, type I cytoskeletal 23 (422 aa).

Positions 1–13 (MNSGHSFSQTPSA) are enriched in polar residues. A head region spans residues 1–71 (MNSGHSFSQT…GRSSPLLGGN (71 aa)). The segment at 1-73 (MNSGHSFSQT…SSPLLGGNGK (73 aa)) is disordered. Residues 72-107 (GKATMQNLNDRLASYLEKVRALEEANMKLESRILKW) are coil 1A. The region spanning 72–382 (GKATMQNLND…RLLEGESEGT (311 aa)) is the IF rod domain. Positions 108-125 (HQQRDPGSKKDYSQYEEN) are linker 1. Residues 126–217 (ITHLQEQIVD…KHHEQEMEKH (92 aa)) are coil 1B. The segment at 218-240 (HVPSDFNVNVKVDTGPREDLIKV) is linker 12. A coil 2 region spans residues 241-378 (LEDMRQEYEL…TTYRRLLEGE (138 aa)). The interval 379-422 (SEGTREESKSSMKVSATPKIKAITQETINGRLVLCQVNEIQKHA) is rod-like helical tail.

Belongs to the intermediate filament family. As to quaternary structure, heterotetramer of two type I and two type II keratins.

This Homo sapiens (Human) protein is Keratin, type I cytoskeletal 23 (KRT23).